The primary structure comprises 376 residues: Phosphoserine aminotransferase (376 aa).

Arg-54 lines the L-glutamate pocket. Pyridoxal 5'-phosphate-binding positions include 88-89 (AT), Trp-115, Thr-165, Asp-186, and Gln-209. An N6-(pyridoxal phosphate)lysine modification is found at Lys-210. 251–252 (NT) lines the pyridoxal 5'-phosphate pocket.

This sequence belongs to the class-V pyridoxal-phosphate-dependent aminotransferase family. SerC subfamily. As to quaternary structure, homodimer. The cofactor is pyridoxal 5'-phosphate.

Its subcellular location is the cytoplasm. It catalyses the reaction O-phospho-L-serine + 2-oxoglutarate = 3-phosphooxypyruvate + L-glutamate. It carries out the reaction 4-(phosphooxy)-L-threonine + 2-oxoglutarate = (R)-3-hydroxy-2-oxo-4-phosphooxybutanoate + L-glutamate. Its pathway is amino-acid biosynthesis; L-serine biosynthesis; L-serine from 3-phospho-D-glycerate: step 2/3. It participates in cofactor biosynthesis; pyridoxine 5'-phosphate biosynthesis; pyridoxine 5'-phosphate from D-erythrose 4-phosphate: step 3/5. In terms of biological role, catalyzes the reversible conversion of 3-phosphohydroxypyruvate to phosphoserine and of 3-hydroxy-2-oxo-4-phosphonooxybutanoate to phosphohydroxythreonine. In Rhodopirellula baltica (strain DSM 10527 / NCIMB 13988 / SH1), this protein is Phosphoserine aminotransferase.